Here is a 748-residue protein sequence, read N- to C-terminus: 5-methyltetrahydropteroyltriglutamate--homocysteine methyltransferase (748 aa).

5-methyltetrahydropteroyltri-L-glutamate-binding positions include 18–21 (REWK) and Lys112. L-homocysteine is bound by residues 420-422 (IGS) and Glu473. L-methionine contacts are provided by residues 420–422 (IGS) and Glu473. Trp550 lines the 5-methyltetrahydropteroyltri-L-glutamate pocket. Asp588 is a binding site for L-homocysteine. L-methionine is bound at residue Asp588. Glu594 contributes to the 5-methyltetrahydropteroyltri-L-glutamate binding site. Zn(2+)-binding residues include His630, Cys632, and Glu654. The active-site Proton donor is His683. Cys715 contributes to the Zn(2+) binding site.

Belongs to the vitamin-B12 independent methionine synthase family. Zn(2+) serves as cofactor.

It catalyses the reaction 5-methyltetrahydropteroyltri-L-glutamate + L-homocysteine = tetrahydropteroyltri-L-glutamate + L-methionine. Its pathway is amino-acid biosynthesis; L-methionine biosynthesis via de novo pathway; L-methionine from L-homocysteine (MetE route): step 1/1. Functionally, catalyzes the transfer of a methyl group from 5-methyltetrahydrofolate to homocysteine resulting in methionine formation. This chain is 5-methyltetrahydropteroyltriglutamate--homocysteine methyltransferase, found in Staphylococcus epidermidis (strain ATCC 35984 / DSM 28319 / BCRC 17069 / CCUG 31568 / BM 3577 / RP62A).